The sequence spans 182 residues: Putative manganese efflux pump MntP (182 aa).

The next 6 helical transmembrane spans lie at 7–27 (IISI…VSLG), 38–58 (IAYI…AGML), 71–91 (TSFA…FSAF), 106–126 (LWII…GLGI), 131–151 (IFVT…LGML), and 159–179 (FLGV…GIFI).

This sequence belongs to the MntP (TC 9.B.29) family.

It is found in the cell membrane. Functionally, probably functions as a manganese efflux pump. The chain is Putative manganese efflux pump MntP from Oceanobacillus iheyensis (strain DSM 14371 / CIP 107618 / JCM 11309 / KCTC 3954 / HTE831).